A 1030-amino-acid chain; its full sequence is Peroxisomal ATPase PEX6 (1030 aa).

The interval 478–683 (VLLHSTTNNV…VETARMTATA (206 aa)) is AAA-cassette D1. Positions 767–956 (GILFYGPPGT…CSDAMLNAMS (190 aa)) are AAA-cassette D2. 772 to 779 (GPPGTGKT) is a binding site for ATP.

It belongs to the AAA ATPase family. Interacts with PEX1; forming the PEX1-PEX6 AAA ATPase complex, which is composed of a heterohexamer formed by a trimer of PEX1-PEX6 dimers. Interacts with PEX15; anchors PEX1-PEX6 heterooligomers to the peroxisomal membrane and mediates their association with the peroxisomal importomer. Interacts with UBP15.

Its subcellular location is the cytoplasm. It localises to the cytosol. It is found in the peroxisome membrane. It catalyses the reaction ATP + H2O = ADP + phosphate + H(+). Component of the PEX1-PEX6 AAA ATPase complex, a protein dislocase complex that mediates the ATP-dependent extraction of the PEX5 receptor from peroxisomal membranes, an essential step for PEX5 recycling. Specifically recognizes PEX5 monoubiquitinated at 'Cys-6', and pulls it out of the peroxisome lumen through the PEX2-PEX10-PEX12 retrotranslocation channel. Extraction by the PEX1-PEX6 AAA ATPase complex is accompanied by unfolding of the TPR repeats and release of bound cargo from PEX5. In Saccharomyces cerevisiae (strain ATCC 204508 / S288c) (Baker's yeast), this protein is Peroxisomal ATPase PEX6.